A 118-amino-acid polypeptide reads, in one-letter code: Large ribosomal subunit protein bL20 (118 aa).

The protein belongs to the bacterial ribosomal protein bL20 family.

Its function is as follows. Binds directly to 23S ribosomal RNA and is necessary for the in vitro assembly process of the 50S ribosomal subunit. It is not involved in the protein synthesizing functions of that subunit. This Francisella tularensis subsp. novicida (strain U112) protein is Large ribosomal subunit protein bL20.